Consider the following 202-residue polypeptide: AFG2-interacting ribosome maturation factor (202 aa).

Part of the 55LCC heterohexameric ATPase complex. Does not associate with pre-60S ribosomal particles.

The protein resides in the nucleus. It localises to the cytoplasm. Part of the 55LCC heterohexameric ATPase complex which is chromatin-associated and promotes replisome proteostasis to maintain replication fork progression and genome stability. Required for replication fork progression, sister chromatid cohesion, and chromosome stability. The ATPase activity is specifically enhanced by replication fork DNA and is coupled to cysteine protease-dependent cleavage of replisome substrates in response to replication fork damage. Uses ATPase activity to process replisome substrates in S-phase, facilitating their proteolytic turnover from chromatin to ensure DNA replication and mitotic fidelity. Involved in the cytoplasmic maturation steps of pre-60S ribosomal particles by promoting the release of shuttling protein RSL24D1/RLP24 from the pre-ribosomal particles. Plays an essential role in early embryonic development. This is AFG2-interacting ribosome maturation factor (airim) from Danio rerio (Zebrafish).